We begin with the raw amino-acid sequence, 435 residues long: MVVNTIYIARHGYRSNWLPEGPYPDPLTGIDSDVPLAEHGVQQAKELAHYLLSLDNQPEAAFASPFYRCLETVQPIAKLLEIPVYLERGIGEWYRPDRKPVIPVPAGYEILSKFFPGVISQEWDSTLTPNEKGETEQEMYMRFKKFWPLFIERVEKEYPNVECILLVTHAASKIALGMSLLGYDNPRMSLNENGDKIRSGSCSLDKYEILKKSYDTIDETDDQTSFTYIPFSDRKWVLTMNGNTEFLSSGEEMNWNFDCVAEAGSDADIKKRQMTKKTSSPIPEADDQTEVETVYISVDIPSGNYKERTEIAKSAILQYSGLETDAPLFRIGNRLYEGSWERLVGTELAFPNAAHVHKKTAGLLSPTEENETTNAGQSKGSSTANDPNIQIQEEDVGLPDSTNTSRDHTGDKEEVQSEKIYRIKERIVLSNVRPM.

Positions 362–417 are disordered; it reads GLLSPTEENETTNAGQSKGSSTANDPNIQIQEEDVGLPDSTNTSRDHTGDKEEVQS. Ser365 is subject to Phosphoserine. Residues 372–391 show a composition bias toward polar residues; sequence TTNAGQSKGSSTANDPNIQI. Over residues 405–417 the composition is skewed to basic and acidic residues; sequence SRDHTGDKEEVQS.

Component of the TFIIIC complex composed of TFC1, TFC3, TFC4, TFC6, TFC7 and TFC8. The subunits are organized in two globular domains, tauA and tauB, connected by a proteolysis-sensitive and flexible linker.

It localises to the nucleus. Its function is as follows. TFIIIC mediates tRNA and 5S RNA gene activation by binding to intragenic promoter elements. Upstream of the transcription start site, TFIIIC assembles the initiation complex TFIIIB-TFIIIC-tDNA, which is sufficient for RNA polymerase III recruitment and function. Part of the tauA domain of TFIIIC that binds boxA DNA promoter sites of tRNA and similar genes. The chain is Transcription factor tau 55 kDa subunit (TFC7) from Saccharomyces cerevisiae (strain ATCC 204508 / S288c) (Baker's yeast).